A 330-amino-acid polypeptide reads, in one-letter code: NmrA-like family domain-containing oxidoreductase notO (330 aa).

NADP(+)-binding positions include 12–17 (VGIGSL), 38–42 (HHFAQ), 59–60 (RS), 80–82 (IEA), and 160–163 (LGGG). Residues 12–32 (VGIGSLPAGLVALFMGATSGI) traverse the membrane as a helical segment. The interval 158–202 (SVLGGGLESPLNEQDLDLRDPKNWTFWSSSMHSGTMGTLTLERIA) is interaction with ASS1. Residues asparagine 180 and asparagine 207 are each glycosylated (N-linked (GlcNAc...) asparagine).

This sequence belongs to the NmrA-type oxidoreductase family.

It localises to the membrane. Its function is as follows. NmrA-like family domain-containing oxidoreductase; part of the gene cluster that mediates the biosynthesis of notoamide, a fungal indole alkaloid that belongs to a family of natural products containing a characteristic bicyclo[2.2.2]diazaoctane core. The first step of notoamide biosynthesis involves coupling of L-proline and L-tryptophan by the bimodular NRPS notE, to produce cyclo-L-tryptophan-L-proline called brevianamide F. The reverse prenyltransferase notF then acts as a deoxybrevianamide E synthase and converts brevianamide F to deoxybrevianamide E via reverse prenylation at C-2 of the indole ring leading to the bicyclo[2.2.2]diazaoctane core. Deoxybrevianamide E is further hydroxylated at C-6 of the indole ring, likely catalyzed by the cytochrome P450 monooxygenase notG, to yield 6-hydroxy-deoxybrevianamide E. 6-hydroxy-deoxybrevianamide E is a specific substrate of the prenyltransferase notC for normal prenylation at C-7 to produce 6-hydroxy-7-prenyl-deoxybrevianamide, also called notoamide S. As the proposed pivotal branching point in notoamide biosynthesis, notoamide S can be diverted to notoamide E through an oxidative pyran ring closure putatively catalyzed by either notH cytochrome P450 monooxygenase or the notD FAD-linked oxidoreductase. This step would be followed by an indole 2,3-epoxidation-initiated pinacol-like rearrangement catalyzed by the notB FAD-dependent monooxygenase leading to the formation of notoamide C and notoamide D. On the other hand notoamide S is converted to notoamide T by notH (or notD), a bifunctional oxidase that also functions as the intramolecular Diels-Alderase responsible for generation of (+)-notoamide T. To generate antipodal (-)-notoaminide T, notH' (or notD') in Aspergillus versicolor is expected to catalyze a Diels-Alder reaction leading to the opposite stereochemistry. The remaining oxidoreductase notD (or notH) likely catalyzes the oxidative pyran ring formation to yield (+)-stephacidin A. The FAD-dependent monooxygenase notI is highly similar to notB and is predicted to catalyze a similar conversion from (+)-stephacidin A to (-)-notoamide B via the 2,3-epoxidation of (+)-stephacidin A followed by a pinacol-type rearrangement. Finally, it remains unclear which enzyme could be responsible for the final hydroxylation steps leading to notoamide A and sclerotiamide. The function of notO in the notoamide biosynthesis has not been determined yet. This Aspergillus sp. (strain MF297-2) protein is NmrA-like family domain-containing oxidoreductase notO.